A 161-amino-acid chain; its full sequence is Nucleotide-binding protein Sfri_0732 (161 aa).

It belongs to the YajQ family.

Functionally, nucleotide-binding protein. This Shewanella frigidimarina (strain NCIMB 400) protein is Nucleotide-binding protein Sfri_0732.